The primary structure comprises 265 residues: HUWE1-associated protein modifying stress responses (265 aa).

Disordered stretches follow at residues 1–22 (MEDK…HWFS), 145–170 (RNSR…GSSV), 195–218 (VRSS…RRNG), and 240–265 (GTRK…NRMI). 2 stretches are compositionally biased toward polar residues: residues 156–170 (VSPN…GSSV) and 195–212 (VRSS…SSNT).

It belongs to the TAPR1 family. As to quaternary structure, oligomer.

Its subcellular location is the nucleus. It is found in the cytoplasm. Acts as a central player within a network of stress response pathways promoting cellular adaptability. Functions as a negative regulator of TP53/P53 in the cellular response to telomere erosion and probably also DNA damage. In Xenopus laevis (African clawed frog), this protein is HUWE1-associated protein modifying stress responses.